Here is a 166-residue protein sequence, read N- to C-terminus: Signal peptidase complex catalytic subunit SEC11 (166 aa).

Residues M1–Q9 are Cytoplasmic-facing. A helical; Signal-anchor for type II membrane protein membrane pass occupies residues F10–I30. The Lumenal portion of the chain corresponds to A31 to E166. Catalysis depends on charge relay system residues S44, H83, and D108. Positions G152–F163 are C-terminal short (CTS) helix.

The protein belongs to the peptidase S26B family. Component of the signal peptidase complex (SPC) composed of a catalytic subunit SEC11 and three accessory subunits SPC1, SPC2 and SPC3. The complex induces a local thinning of the ER membrane which is used to measure the length of the signal peptide (SP) h-region of protein substrates. This ensures the selectivity of the complex towards h-regions shorter than 18-20 amino acids. SPC associates with the translocon complex.

It localises to the endoplasmic reticulum membrane. It catalyses the reaction Cleavage of hydrophobic, N-terminal signal or leader sequences from secreted and periplasmic proteins.. In terms of biological role, catalytic component of the signal peptidase complex (SPC) which catalyzes the cleavage of N-terminal signal sequences from nascent proteins as they are translocated into the lumen of the endoplasmic reticulum. Specifically cleaves N-terminal signal peptides that contain a hydrophobic alpha-helix (h-region) shorter than 18-20 amino acids. In Candida albicans (strain SC5314 / ATCC MYA-2876) (Yeast), this protein is Signal peptidase complex catalytic subunit SEC11 (SEC11).